A 188-amino-acid chain; its full sequence is Glutathione S-transferase 2 (188 aa).

Residues 2–79 (VHYKLMCFDV…FLARQYGYSG (78 aa)) enclose the GST N-terminal domain. Glutathione contacts are provided by residues Lys-43, 49-51 (GQL), and 63-64 (QS). The GST C-terminal domain maps to 81–188 (TPTEEMQVDS…PHLNVFIRKL (108 aa)).

Belongs to the GST superfamily. Sigma family.

The enzyme catalyses RX + glutathione = an S-substituted glutathione + a halide anion + H(+). Its function is as follows. Conjugation of reduced glutathione to a wide number of exogenous and endogenous hydrophobic electrophiles. The chain is Glutathione S-transferase 2 (gst-2) from Caenorhabditis elegans.